A 385-amino-acid polypeptide reads, in one-letter code: Cytochrome b (385 aa).

Transmembrane regions (helical) follow at residues 32–52 (MGSL…FMAM), 76–98 (WLLR…MHMA), 113–133 (VWII…LGYC), and 179–199 (FFAL…MHFM). His-82 and His-96 together coordinate heme b. His-183 and His-197 together coordinate heme b. His-202 is an a ubiquinone binding site. 4 helical membrane passes run 225-245 (FIFK…LFVF), 289-309 (LLGV…PLTD), 321-341 (ISKL…VLGS), and 348-368 (FVQM…IFVP).

The protein belongs to the cytochrome b family. In terms of assembly, fungal cytochrome b-c1 complex contains 10 subunits; 3 respiratory subunits, 2 core proteins and 5 low-molecular weight proteins. Cytochrome b-c1 complex is a homodimer. It depends on heme b as a cofactor.

Its subcellular location is the mitochondrion inner membrane. Functionally, component of the ubiquinol-cytochrome c reductase complex (complex III or cytochrome b-c1 complex) that is part of the mitochondrial respiratory chain. The b-c1 complex mediates electron transfer from ubiquinol to cytochrome c. Contributes to the generation of a proton gradient across the mitochondrial membrane that is then used for ATP synthesis. The polypeptide is Cytochrome b (COB) (Monosporozyma servazzii (Yeast)).